The primary structure comprises 147 residues: Nucleoside diphosphate kinase (147 aa).

Positions 11, 59, 87, 93, 104, and 114 each coordinate ATP. Histidine 117 serves as the catalytic Pros-phosphohistidine intermediate.

The protein belongs to the NDK family. As to quaternary structure, homotetramer. Requires Mg(2+) as cofactor.

It is found in the cytoplasm. It catalyses the reaction a 2'-deoxyribonucleoside 5'-diphosphate + ATP = a 2'-deoxyribonucleoside 5'-triphosphate + ADP. The enzyme catalyses a ribonucleoside 5'-diphosphate + ATP = a ribonucleoside 5'-triphosphate + ADP. Functionally, major role in the synthesis of nucleoside triphosphates other than ATP. The ATP gamma phosphate is transferred to the NDP beta phosphate via a ping-pong mechanism, using a phosphorylated active-site intermediate. In Anaeromyxobacter sp. (strain K), this protein is Nucleoside diphosphate kinase.